Reading from the N-terminus, the 83-residue chain is Retinal cone rhodopsin-sensitive cGMP 3',5'-cyclic phosphodiesterase subunit gamma (83 aa).

The segment at 1–54 (MSDSPSLSPPAPSQGPTTPRKGPPKFKQRQTRQFKSKPPKKGVKGFGDDIPGME) is disordered. A compositionally biased stretch (basic residues) spans 22–43 (GPPKFKQRQTRQFKSKPPKKGV).

Belongs to the rod/cone cGMP-PDE gamma subunit family. In terms of assembly, tetramer composed of two catalytic chains (alpha and beta), and two inhibitory chains (gamma).

The catalysed reaction is 3',5'-cyclic GMP + H2O = GMP + H(+). Its function is as follows. Participates in processes of transmission and amplification of the visual signal. cGMP-PDEs are the effector molecules in G-protein-mediated phototransduction in vertebrate rods and cones. This chain is Retinal cone rhodopsin-sensitive cGMP 3',5'-cyclic phosphodiesterase subunit gamma (Pde6h), found in Mus musculus (Mouse).